The sequence spans 144 residues: Large ribosomal subunit protein uL15 (144 aa).

Residues 1–53 (MRLNTLSPAEGAKHSAKRLGRGIGSGLGKTGGRGHKGQKSRTGGGVRRGFEGG) form a disordered region. Over residues 21–31 (RGIGSGLGKTG) the composition is skewed to gly residues.

The protein belongs to the universal ribosomal protein uL15 family. Part of the 50S ribosomal subunit.

Binds to the 23S rRNA. The sequence is that of Large ribosomal subunit protein uL15 from Haemophilus influenzae (strain ATCC 51907 / DSM 11121 / KW20 / Rd).